Reading from the N-terminus, the 440-residue chain is Cytochrome P450 monooygenase 1 (440 aa).

Cysteine 381 contacts heme.

This sequence belongs to the cytochrome P450 family. The cofactor is heme.

It participates in plant hormone biosynthesis; gibberellin biosynthesis. Its function is as follows. GA14 synthase; part of the gene cluster that mediates the biosynthesis of gibberellins (GAs), diterpenoids that may provide a selective advantage during infection of the preferred host plant, rice. Gibberellins (GAs) are diterpenoids and are synthesized via the mevalonate pathway. Biosynthesis of the major metabolite GA3 (gibberellic acid) from geranylgeranyl diphosphate (GGPP) requires 13 steps. The GGPP produced by the geranylgeranyl diphosphate synthase GGS2 is converted to ent-kaurene via ent-copalyldiphosphate in a two-step cyclization reaction performed by the bifunctional ent-copalyl diphosphate synthase/ent-kaurene synthase enzyme (CPS/KS). Ent-Kaurene is metabolized to GAs by a series of oxidation reactions catalyzed by cytochrome P450 monooxygenases. Cytochrome P450 monooxygenase P450-4 is an ent-kaurene oxidase that catalyzes the three oxidation steps between ent-kaurene and ent-kaurenoic acid. The highly multifunctional cytochrome P450 monooxygenase P450-1 then catalyzes four steps involving oxidation at two carbon atoms, in the main pathway from ent-kaurenoic acid to GA14 via GA12-aldehyde as well as producing kaurenolides and fujenoic acids as by-products. The cytochrome P450 monooxygenase P450-2 then converts GA14 to GA4 by removal of C-20. GA4 is further converted to GA7 by the GA4 desaturase DES via 1,2-desaturation before cytochrome P450 monooxygenase P450-3, a 13-hydroxylase, hydroxylates GA7 to GA3, the final product of the GA-biosynthetic pathway. The sequence is that of Cytochrome P450 monooygenase 1 from Gibberella fujikuroi (strain CBS 195.34 / IMI 58289 / NRRL A-6831) (Bakanae and foot rot disease fungus).